The sequence spans 128 residues: Iron-sulfur cluster insertion protein ErpA (128 aa).

Cys56, Cys120, and Cys122 together coordinate iron-sulfur cluster.

This sequence belongs to the HesB/IscA family. Homodimer. Iron-sulfur cluster is required as a cofactor.

In terms of biological role, required for insertion of 4Fe-4S clusters for at least IspG. In Xanthomonas euvesicatoria pv. vesicatoria (strain 85-10) (Xanthomonas campestris pv. vesicatoria), this protein is Iron-sulfur cluster insertion protein ErpA.